The chain runs to 334 residues: Holliday junction branch migration complex subunit RuvB (334 aa).

A large ATPase domain (RuvB-L) region spans residues Ala4–Tyr184. Residues Arg24, Gly65, Lys68, Thr69, Thr70, Glu131–Tyr133, Arg174, Tyr184, and Arg221 contribute to the ATP site. Thr69 lines the Mg(2+) pocket. Residues Asn185 to Asp255 are small ATPAse domain (RuvB-S). The interval Gly258–Glu334 is head domain (RuvB-H). Residues Arg294, Arg313, and Arg318 each contribute to the DNA site.

This sequence belongs to the RuvB family. In terms of assembly, homohexamer. Forms an RuvA(8)-RuvB(12)-Holliday junction (HJ) complex. HJ DNA is sandwiched between 2 RuvA tetramers; dsDNA enters through RuvA and exits via RuvB. An RuvB hexamer assembles on each DNA strand where it exits the tetramer. Each RuvB hexamer is contacted by two RuvA subunits (via domain III) on 2 adjacent RuvB subunits; this complex drives branch migration. In the full resolvosome a probable DNA-RuvA(4)-RuvB(12)-RuvC(2) complex forms which resolves the HJ.

The protein localises to the cytoplasm. It carries out the reaction ATP + H2O = ADP + phosphate + H(+). The RuvA-RuvB-RuvC complex processes Holliday junction (HJ) DNA during genetic recombination and DNA repair, while the RuvA-RuvB complex plays an important role in the rescue of blocked DNA replication forks via replication fork reversal (RFR). RuvA specifically binds to HJ cruciform DNA, conferring on it an open structure. The RuvB hexamer acts as an ATP-dependent pump, pulling dsDNA into and through the RuvAB complex. RuvB forms 2 homohexamers on either side of HJ DNA bound by 1 or 2 RuvA tetramers; 4 subunits per hexamer contact DNA at a time. Coordinated motions by a converter formed by DNA-disengaged RuvB subunits stimulates ATP hydrolysis and nucleotide exchange. Immobilization of the converter enables RuvB to convert the ATP-contained energy into a lever motion, pulling 2 nucleotides of DNA out of the RuvA tetramer per ATP hydrolyzed, thus driving DNA branch migration. The RuvB motors rotate together with the DNA substrate, which together with the progressing nucleotide cycle form the mechanistic basis for DNA recombination by continuous HJ branch migration. Branch migration allows RuvC to scan DNA until it finds its consensus sequence, where it cleaves and resolves cruciform DNA. The polypeptide is Holliday junction branch migration complex subunit RuvB (Shewanella sp. (strain ANA-3)).